The sequence spans 626 residues: DNA mismatch repair protein MutL (626 aa).

The disordered stretch occupies residues 377–413 (EEPQAVKQPTQLWQPSTKPIIEEPIQEEKSWDSNEEG). The segment covering 383–393 (KQPTQLWQPST) has biased composition (polar residues).

Belongs to the DNA mismatch repair MutL/HexB family.

In terms of biological role, this protein is involved in the repair of mismatches in DNA. It is required for dam-dependent methyl-directed DNA mismatch repair. May act as a 'molecular matchmaker', a protein that promotes the formation of a stable complex between two or more DNA-binding proteins in an ATP-dependent manner without itself being part of a final effector complex. This chain is DNA mismatch repair protein MutL, found in Bacillus anthracis (strain A0248).